The sequence spans 647 residues: Threonine--tRNA ligase (647 aa).

A TGS domain is found at 1–61 (MIKITFPDGA…EEDGSIEIVT (61 aa)). A catalytic region spans residues 240–538 (DHRKLGKELD…LIETYKGAFP (299 aa)). The Zn(2+) site is built by C334, H385, and H515.

It belongs to the class-II aminoacyl-tRNA synthetase family. As to quaternary structure, homodimer. It depends on Zn(2+) as a cofactor.

Its subcellular location is the cytoplasm. It catalyses the reaction tRNA(Thr) + L-threonine + ATP = L-threonyl-tRNA(Thr) + AMP + diphosphate + H(+). Catalyzes the attachment of threonine to tRNA(Thr) in a two-step reaction: L-threonine is first activated by ATP to form Thr-AMP and then transferred to the acceptor end of tRNA(Thr). Also edits incorrectly charged L-seryl-tRNA(Thr). This is Threonine--tRNA ligase from Streptococcus pyogenes serotype M6 (strain ATCC BAA-946 / MGAS10394).